A 258-amino-acid chain; its full sequence is Probable N-acetylglucosaminyl-phosphatidylinositol de-N-acetylase (258 aa).

Positions 147 to 170 are disordered; the sequence is KSSSTTTTSTTSSSSSSSSLSNRT. Residues 148–170 show a composition bias toward low complexity; that stretch reads SSSTTTTSTTSSSSSSSSLSNRT.

Belongs to the PIGL family.

The protein localises to the endoplasmic reticulum membrane. The catalysed reaction is a 6-(N-acetyl-alpha-D-glucosaminyl)-1-(1,2-diacyl-sn-glycero-3-phospho)-1D-myo-inositol + H2O = a 6-(alpha-D-glucosaminyl)-1-(1,2-diacyl-sn-glycero-3-phospho)-1D-myo-inositol + acetate. The protein operates within glycolipid biosynthesis; glycosylphosphatidylinositol-anchor biosynthesis. In terms of biological role, involved in the second step of GPI biosynthesis. De-N-acetylation of N-acetylglucosaminyl-phosphatidylinositol. This chain is Probable N-acetylglucosaminyl-phosphatidylinositol de-N-acetylase (pigl), found in Dictyostelium discoideum (Social amoeba).